A 559-amino-acid chain; its full sequence is Glucose-6-phosphate isomerase (559 aa).

Catalysis depends on Glu352, which acts as the Proton donor. Active-site residues include His383 and Lys511.

The protein belongs to the GPI family.

The protein localises to the cytoplasm. It carries out the reaction alpha-D-glucose 6-phosphate = beta-D-fructose 6-phosphate. It functions in the pathway carbohydrate biosynthesis; gluconeogenesis. It participates in carbohydrate degradation; glycolysis; D-glyceraldehyde 3-phosphate and glycerone phosphate from D-glucose: step 2/4. Functionally, catalyzes the reversible isomerization of glucose-6-phosphate to fructose-6-phosphate. The sequence is that of Glucose-6-phosphate isomerase from Chlorobium phaeobacteroides (strain DSM 266 / SMG 266 / 2430).